The following is a 395-amino-acid chain: Elongation factor Tu (395 aa).

In terms of domain architecture, tr-type G spans 10–204; sequence KPHVNVGTIG…AVDEYIPEPT (195 aa). The tract at residues 19-26 is G1; it reads GHVDHGKT. 19 to 26 contacts GTP; sequence GHVDHGKT. Thr-26 contributes to the Mg(2+) binding site. The interval 60 to 64 is G2; the sequence is GITIA. The segment at 81 to 84 is G3; sequence DCPG. GTP contacts are provided by residues 81 to 85 and 136 to 139; these read DCPGH and NKVD. The G4 stretch occupies residues 136–139; sequence NKVD. The G5 stretch occupies residues 174–176; sequence SAL.

It belongs to the TRAFAC class translation factor GTPase superfamily. Classic translation factor GTPase family. EF-Tu/EF-1A subfamily. In terms of assembly, monomer.

Its subcellular location is the cytoplasm. The catalysed reaction is GTP + H2O = GDP + phosphate + H(+). Functionally, GTP hydrolase that promotes the GTP-dependent binding of aminoacyl-tRNA to the A-site of ribosomes during protein biosynthesis. In Exiguobacterium sibiricum (strain DSM 17290 / CCUG 55495 / CIP 109462 / JCM 13490 / 255-15), this protein is Elongation factor Tu.